Consider the following 197-residue polypeptide: Large ribosomal subunit protein bL17 (197 aa).

A disordered region spans residues 136-197 (RAAKKADAPQ…DAEKSSDTEK (62 aa)). Positions 148–187 (VADEATDADESVEDEAPAQDDSADEVEAAADETPADDAEA) are enriched in acidic residues. Basic and acidic residues predominate over residues 188 to 197 (DAEKSSDTEK).

The protein belongs to the bacterial ribosomal protein bL17 family. As to quaternary structure, part of the 50S ribosomal subunit. Contacts protein L32.

The chain is Large ribosomal subunit protein bL17 from Beutenbergia cavernae (strain ATCC BAA-8 / DSM 12333 / CCUG 43141 / JCM 11478 / NBRC 16432 / NCIMB 13614 / HKI 0122).